A 309-amino-acid polypeptide reads, in one-letter code: Vomeronasal type-1 receptor 52 (309 aa).

At 1–19 the chain is on the extracellular side; that stretch reads MNKDHTLYCSVYIRNAFFS. A helical transmembrane segment spans residues 20–40; that stretch reads EIGIGISANSCLLLFHTFMFI. The Cytoplasmic portion of the chain corresponds to 41–49; the sequence is RGHRPRLTD. The chain crosses the membrane as a helical span at residues 50–70; that stretch reads LPIGFVALIHLVMLLLAAYIT. At 71 to 93 the chain is on the extracellular side; it reads EDFFMSSGGWDDITCKLVIFLHR. A disulfide bridge links Cys85 with Cys172. The chain crosses the membrane as a helical span at residues 94 to 114; sequence FFRSLSVCATCLLSVFQAIIL. The Cytoplasmic segment spans residues 115-134; the sequence is CPQSSHLAKLKQNSPHQLSY. Residues 135 to 155 traverse the membrane as a helical segment; it reads FFIFLSIFYTSISSHILIAAI. At 156–187 the chain is on the extracellular side; sequence PTQNITFVNLIYITNSCSFLPLSSSMQHTFST. The N-linked (GlcNAc...) asparagine glycan is linked to Asn159. A helical transmembrane segment spans residues 188–208; that stretch reads LLAFRNVFVIGLMGLSTCYMA. Topologically, residues 209–238 are cytoplasmic; that stretch reads TLLCRHKTRSQRLQNSKLSPKATPEQRALR. A helical transmembrane segment spans residues 239–259; it reads TILMLMSFFLLMSTFDSIISY. Residues 260–268 are Extracellular-facing; sequence SRTILQGNP. A helical transmembrane segment spans residues 269-289; the sequence is LPFCFQILVAHSYAAVSPLLV. Residues 290–309 are Cytoplasmic-facing; sequence LSNEKRITNLLISMYEKIVL.

This sequence belongs to the G-protein coupled receptor 1 family.

The protein localises to the cell membrane. Its function is as follows. Putative pheromone receptor implicated in the regulation of social and reproductive behavior. The chain is Vomeronasal type-1 receptor 52 (Vmn1r52) from Mus musculus (Mouse).